Consider the following 175-residue polypeptide: Large ribosomal subunit protein uL10 (175 aa).

It belongs to the universal ribosomal protein uL10 family. Part of the ribosomal stalk of the 50S ribosomal subunit. The N-terminus interacts with L11 and the large rRNA to form the base of the stalk. The C-terminus forms an elongated spine to which L12 dimers bind in a sequential fashion forming a multimeric L10(L12)X complex.

Its function is as follows. Forms part of the ribosomal stalk, playing a central role in the interaction of the ribosome with GTP-bound translation factors. In Psychrobacter sp. (strain PRwf-1), this protein is Large ribosomal subunit protein uL10.